The sequence spans 91 residues: Transcriptional repressor FrmR (91 aa).

The protein belongs to the FrmR/RcnR family. As to quaternary structure, homotetramer.

It is found in the cytoplasm. Functionally, formaldehyde sensor. In the absence of formaldehyde, mediates repression of the frmRAB operon. Acts by binding directly to the frmRAB promoter region. In the presence of formaldehyde, it dissociates from the frmRAB promoter region and allows expression of the formaldehyde detoxification system encoded by frmA and frmB. This Escherichia coli (strain UTI89 / UPEC) protein is Transcriptional repressor FrmR.